We begin with the raw amino-acid sequence, 338 residues long: Malate dehydrogenase, mitochondrial (338 aa).

Residues 1–24 (MLSALARPAGAALRRSFSTSAQNN) constitute a mitochondrion transit peptide. NAD(+)-binding positions include 31–37 (GASGGIG) and D57. An O-linked (GlcNAc) serine glycan is attached at S33. N6-acetyllysine; alternate occurs at positions 78 and 91. N6-succinyllysine; alternate occurs at positions 78 and 91. Substrate-binding residues include R104 and R110. NAD(+) is bound by residues N117 and 140 to 142 (IAN). Residue N142 coordinates substrate. Residue K165 is modified to N6-acetyllysine. R176 is a substrate binding site. K185 carries the post-translational modification N6-acetyllysine; alternate. An N6-succinyllysine; alternate modification is found at K185. H200 functions as the Proton acceptor in the catalytic mechanism. K203 carries the N6-succinyllysine modification. Residues K215 and K239 each carry the N6-acetyllysine; alternate modification. N6-succinyllysine; alternate is present on residues K215 and K239. K239 bears the N6-malonyllysine; alternate mark. S246 carries the post-translational modification Phosphoserine. M251 is a binding site for NAD(+). N6-succinyllysine is present on K269. N6-acetyllysine; alternate is present on residues K296, K301, and K307. 3 positions are modified to N6-succinyllysine; alternate: K296, K301, and K307. K307 is modified (N6-malonyllysine; alternate). Position 309 is a phosphothreonine (T309). N6-acetyllysine; alternate occurs at positions 314 and 324. N6-succinyllysine; alternate occurs at positions 314 and 324. At S326 the chain carries Phosphoserine. N6-acetyllysine; alternate is present on residues K328, K329, and K335. K328 bears the N6-succinyllysine; alternate mark. K329 carries the N6-malonyllysine; alternate modification. N6-succinyllysine; alternate is present on K335.

Belongs to the LDH/MDH superfamily. MDH type 1 family. Homodimer. Acetylation is enhanced after treatment either with trichostin A (TCA) or with nicotinamide (NAM) with the appearance of tri- and tetraacetylations. Glucose also increases acetylation. Acetylation of Lys-239 and Lys-314 is observed in liver mitochondria from fasted mice but not from fed mice.

The protein localises to the mitochondrion matrix. It carries out the reaction (S)-malate + NAD(+) = oxaloacetate + NADH + H(+). With respect to regulation, enzyme activity is enhanced by acetylation. The chain is Malate dehydrogenase, mitochondrial (Mdh2) from Mus musculus (Mouse).